A 432-amino-acid polypeptide reads, in one-letter code: Serine hydroxymethyltransferase 1 (432 aa).

(6S)-5,6,7,8-tetrahydrofolate-binding positions include Leu-131 and 135 to 137; that span reads GHL. Position 240 is an N6-(pyridoxal phosphate)lysine (Lys-240).

It belongs to the SHMT family. In terms of assembly, homodimer. Pyridoxal 5'-phosphate is required as a cofactor.

The protein resides in the cytoplasm. The enzyme catalyses (6R)-5,10-methylene-5,6,7,8-tetrahydrofolate + glycine + H2O = (6S)-5,6,7,8-tetrahydrofolate + L-serine. The protein operates within one-carbon metabolism; tetrahydrofolate interconversion. It participates in amino-acid biosynthesis; glycine biosynthesis; glycine from L-serine: step 1/1. Its function is as follows. Catalyzes the reversible interconversion of serine and glycine with tetrahydrofolate (THF) serving as the one-carbon carrier. This reaction serves as the major source of one-carbon groups required for the biosynthesis of purines, thymidylate, methionine, and other important biomolecules. Also exhibits THF-independent aldolase activity toward beta-hydroxyamino acids, producing glycine and aldehydes, via a retro-aldol mechanism. In Rhodopseudomonas palustris (strain ATCC BAA-98 / CGA009), this protein is Serine hydroxymethyltransferase 1.